The chain runs to 144 residues: Large ribosomal subunit protein uL13 (144 aa).

It belongs to the universal ribosomal protein uL13 family. As to quaternary structure, part of the 50S ribosomal subunit.

In terms of biological role, this protein is one of the early assembly proteins of the 50S ribosomal subunit, although it is not seen to bind rRNA by itself. It is important during the early stages of 50S assembly. This Oleidesulfovibrio alaskensis (strain ATCC BAA-1058 / DSM 17464 / G20) (Desulfovibrio alaskensis) protein is Large ribosomal subunit protein uL13.